Reading from the N-terminus, the 349-residue chain is Protein RecA (349 aa).

65 to 72 serves as a coordination point for ATP; that stretch reads GPESSGKT.

The protein belongs to the RecA family.

It is found in the cytoplasm. Can catalyze the hydrolysis of ATP in the presence of single-stranded DNA, the ATP-dependent uptake of single-stranded DNA by duplex DNA, and the ATP-dependent hybridization of homologous single-stranded DNAs. It interacts with LexA causing its activation and leading to its autocatalytic cleavage. The protein is Protein RecA of Clostridium acetobutylicum (strain ATCC 824 / DSM 792 / JCM 1419 / IAM 19013 / LMG 5710 / NBRC 13948 / NRRL B-527 / VKM B-1787 / 2291 / W).